Consider the following 287-residue polypeptide: Protease HtpX (287 aa).

The next 2 membrane-spanning stretches (helical) occupy residues 4-24 and 36-56; these read ILLFLATNLAVVLVLSVVLNI and LSGLLVMAAVFGFGGAFISLL. His-143 lines the Zn(2+) pocket. Residue Glu-144 is part of the active site. His-147 is a binding site for Zn(2+). The next 2 helical transmembrane spans lie at 158-178 and 192-212; these read LMQGVVNTFVIFLSRFIANIV and MVYFGVSMVLELVFGFLASFI. Glu-221 contacts Zn(2+).

It belongs to the peptidase M48B family. Zn(2+) serves as cofactor.

It localises to the cell inner membrane. This is Protease HtpX from Vibrio cholerae serotype O1 (strain ATCC 39315 / El Tor Inaba N16961).